A 606-amino-acid chain; its full sequence is Elongation factor 4 (606 aa).

The tr-type G domain occupies 10-192 (IRKKNFCIIA…AICKYVPSPR (183 aa)). GTP-binding positions include 22 to 27 (DHGKST) and 139 to 142 (NKID).

It belongs to the TRAFAC class translation factor GTPase superfamily. Classic translation factor GTPase family. LepA subfamily.

The protein localises to the cell inner membrane. The catalysed reaction is GTP + H2O = GDP + phosphate + H(+). Required for accurate and efficient protein synthesis under certain stress conditions. May act as a fidelity factor of the translation reaction, by catalyzing a one-codon backward translocation of tRNAs on improperly translocated ribosomes. Back-translocation proceeds from a post-translocation (POST) complex to a pre-translocation (PRE) complex, thus giving elongation factor G a second chance to translocate the tRNAs correctly. Binds to ribosomes in a GTP-dependent manner. In Borreliella burgdorferi (strain ATCC 35210 / DSM 4680 / CIP 102532 / B31) (Borrelia burgdorferi), this protein is Elongation factor 4.